Consider the following 349-residue polypeptide: sn-glycerol-3-phosphate import ATP-binding protein UgpC (349 aa).

An ABC transporter domain is found at 4–234; sequence ISLRDVRKSY…PATTFVAGFI (231 aa). 36 to 43 lines the ATP pocket; it reads GPSGCGKS.

This sequence belongs to the ABC transporter superfamily. sn-glycerol-3-phosphate importer (TC 3.A.1.1.3) family. As to quaternary structure, the complex is composed of two ATP-binding proteins (UgpC), two transmembrane proteins (UgpA and UgpE) and a solute-binding protein (UgpB).

It localises to the cell inner membrane. It catalyses the reaction sn-glycerol 3-phosphate(out) + ATP + H2O = sn-glycerol 3-phosphate(in) + ADP + phosphate + H(+). Part of the ABC transporter complex UgpBAEC involved in sn-glycerol-3-phosphate (G3P) import. Responsible for energy coupling to the transport system. This chain is sn-glycerol-3-phosphate import ATP-binding protein UgpC, found in Cereibacter sphaeroides (strain ATCC 17023 / DSM 158 / JCM 6121 / CCUG 31486 / LMG 2827 / NBRC 12203 / NCIMB 8253 / ATH 2.4.1.) (Rhodobacter sphaeroides).